Here is a 231-residue protein sequence, read N- to C-terminus: Chromosome partition protein MukE (231 aa).

Residues 195 to 231 are disordered; sequence MIRDGEAMPVEGSLSLKDDSDDNDRTDDTAPETGEDE. Residues 213–231 show a composition bias toward acidic residues; it reads DSDDNDRTDDTAPETGEDE.

Belongs to the MukE family. Interacts, and probably forms a ternary complex, with MukF and MukB. The complex formation is stimulated by calcium or magnesium.

It is found in the cytoplasm. Its subcellular location is the nucleoid. Involved in chromosome condensation, segregation and cell cycle progression. May participate in facilitating chromosome segregation by condensation DNA from both sides of a centrally located replisome during cell division. Probably acts via its interaction with MukB and MukF. The protein is Chromosome partition protein MukE of Pectobacterium atrosepticum (strain SCRI 1043 / ATCC BAA-672) (Erwinia carotovora subsp. atroseptica).